An 87-amino-acid polypeptide reads, in one-letter code: MSRSSKKGAFVDAHLLKKVIEMNKQAKKKPIKTWSRRSTIFPEFVGNTFSVHNGKTFINVYVTDDMVGHKLGEFSPTRNFKQHTANR.

The protein belongs to the universal ribosomal protein uS19 family.

Its function is as follows. Protein S19 forms a complex with S13 that binds strongly to the 16S ribosomal RNA. This is Small ribosomal subunit protein uS19 (rpsS) from Mycoplasma genitalium (strain ATCC 33530 / DSM 19775 / NCTC 10195 / G37) (Mycoplasmoides genitalium).